The sequence spans 244 residues: Probable ABC transporter ATP-binding protein in ycf23-apcF intergenic region (244 aa).

Residues 9–241 (LEINNLTVSY…KLSTLFGEHI (233 aa)) form the ABC transporter domain. 41–48 (GPNGAGKS) serves as a coordination point for ATP.

The protein belongs to the ABC transporter superfamily.

The protein resides in the plastid. It localises to the cyanelle. This is Probable ABC transporter ATP-binding protein in ycf23-apcF intergenic region from Cyanophora paradoxa.